Here is a 187-residue protein sequence, read N- to C-terminus: ATP synthase subunit b, chloroplastic (187 aa).

A helical membrane pass occupies residues 34-56 (IINLSVVLGLVFTLGRNFLISLL).

It belongs to the ATPase B chain family. F-type ATPases have 2 components, F(1) - the catalytic core - and F(0) - the membrane proton channel. F(1) has five subunits: alpha(3), beta(3), gamma(1), delta(1), epsilon(1). F(0) has four main subunits: a(1), b(1), b'(1) and c(10-14). The alpha and beta chains form an alternating ring which encloses part of the gamma chain. F(1) is attached to F(0) by a central stalk formed by the gamma and epsilon chains, while a peripheral stalk is formed by the delta, b and b' chains.

The protein resides in the plastid. The protein localises to the chloroplast thylakoid membrane. Functionally, f(1)F(0) ATP synthase produces ATP from ADP in the presence of a proton or sodium gradient. F-type ATPases consist of two structural domains, F(1) containing the extramembraneous catalytic core and F(0) containing the membrane proton channel, linked together by a central stalk and a peripheral stalk. During catalysis, ATP synthesis in the catalytic domain of F(1) is coupled via a rotary mechanism of the central stalk subunits to proton translocation. Component of the F(0) channel, it forms part of the peripheral stalk, linking F(1) to F(0). This Pleurastrum terricola (Filamentous green alga) protein is ATP synthase subunit b, chloroplastic.